Here is a 156-residue protein sequence, read N- to C-terminus: Endogenous retrovirus group K member 8 Pro protein (156 aa).

One can recognise a Peptidase A2 domain in the interval 21 to 96 (FEGLVDTGAD…IPLNLWGRDL (76 aa)). Asp26 is a catalytic residue. Residues 111 to 156 (YSPTSQKIMTKRGYIPGKGLGKNEDGIKIPFEAKINQKREGIGYPF) enclose the G-patch domain.

The protein belongs to the peptidase A2 family. HERV class-II K(HML-2) subfamily. As to quaternary structure, active as a homodimer. Post-translationally, autoproteolytically processed at the N-terminus. Expected C-terminal autoprocessing not detected. The sequence shown is that of the processed Pro protein.

The enzyme catalyses Processing at the authentic HIV-1 PR recognition site and release of the mature p17 matrix and the p24 capsid protein, as a result of the cleavage of the -SQNY-|-PIVQ- cleavage site.. Functionally, retroviral proteases have roles in the processing of the primary translation products and the maturation of the viral particle. Endogenous Pro proteins may have kept, lost or modified their original function during evolution. This Homo sapiens (Human) protein is Endogenous retrovirus group K member 8 Pro protein (ERVK-8).